We begin with the raw amino-acid sequence, 249 residues long: uncharacterized protein (249 aa).

This is an uncharacterized protein from Colorado tick fever virus (strain USA/Florio N-7180) (CTFV).